Reading from the N-terminus, the 894-residue chain is Translation initiation factor IF-2 (894 aa).

The disordered stretch occupies residues 25-304 (ADAGMNKASS…KPTSMQHGFD (280 aa)). Basic and acidic residues-rich tracts occupy residues 33–44 (SSDHVSDEEKQK), 52–62 (EHGDKSGESEP), 101–174 (STIE…KEMN), 184–239 (AKKE…ENSD), and 247–263 (YARE…EGGA). The span at 283–293 (RGGKGRNKGKL) shows a compositional bias: basic residues. Residues 393 to 562 (PRAPVVTIMG…LLQSEVLELT (170 aa)) enclose the tr-type G domain. The segment at 402 to 409 (GHVDHGKT) is G1. 402 to 409 (GHVDHGKT) is a binding site for GTP. Residues 427–431 (GITQH) form a G2 region. The tract at residues 448–451 (DTPG) is G3. Residues 448-452 (DTPGH) and 502-505 (NKID) contribute to the GTP site. The segment at 502–505 (NKID) is G4. The interval 538-540 (SAK) is G5.

Belongs to the TRAFAC class translation factor GTPase superfamily. Classic translation factor GTPase family. IF-2 subfamily.

The protein resides in the cytoplasm. Functionally, one of the essential components for the initiation of protein synthesis. Protects formylmethionyl-tRNA from spontaneous hydrolysis and promotes its binding to the 30S ribosomal subunits. Also involved in the hydrolysis of GTP during the formation of the 70S ribosomal complex. The polypeptide is Translation initiation factor IF-2 (Vibrio campbellii (strain ATCC BAA-1116)).